The sequence spans 576 residues: Arginine--tRNA ligase (576 aa).

A 'HIGH' region motif is present at residues 126–136 (ANPTGPMHIGH).

It belongs to the class-I aminoacyl-tRNA synthetase family. Monomer.

Its subcellular location is the cytoplasm. It carries out the reaction tRNA(Arg) + L-arginine + ATP = L-arginyl-tRNA(Arg) + AMP + diphosphate. This chain is Arginine--tRNA ligase (argS), found in Rickettsia prowazekii (strain Madrid E).